Here is an 88-residue protein sequence, read N- to C-terminus: Small ribosomal subunit protein eS25B (88 aa).

This sequence belongs to the eukaryotic ribosomal protein eS25 family. As to quaternary structure, component of the small ribosomal subunit (SSU). Mature yeast ribosomes consist of a small (40S) and a large (60S) subunit. The 40S small subunit contains 1 molecule of ribosomal RNA (18S rRNA) and at least 33 different proteins. The large 60S subunit contains 3 rRNA molecules (25S, 5.8S and 5S rRNA) and at least 46 different proteins.

It localises to the cytoplasm. Component of the ribosome, a large ribonucleoprotein complex responsible for the synthesis of proteins in the cell. The small ribosomal subunit (SSU) binds messenger RNAs (mRNAs) and translates the encoded message by selecting cognate aminoacyl-transfer RNA (tRNA) molecules. The large subunit (LSU) contains the ribosomal catalytic site termed the peptidyl transferase center (PTC), which catalyzes the formation of peptide bonds, thereby polymerizing the amino acids delivered by tRNAs into a polypeptide chain. The nascent polypeptides leave the ribosome through a tunnel in the LSU and interact with protein factors that function in enzymatic processing, targeting, and the membrane insertion of nascent chains at the exit of the ribosomal tunnel. This Schizosaccharomyces pombe (strain 972 / ATCC 24843) (Fission yeast) protein is Small ribosomal subunit protein eS25B (rps2501).